The following is a 2879-amino-acid chain: Peramine synthetase ppzA (2879 aa).

The segment covering 1-12 has biased composition (basic and acidic residues); sequence MTYDEGGHRNNE. The disordered stretch occupies residues 1 to 52; sequence MTYDEGGHRNNEETPQDVNMSSNNEGMSTSSPTGSYGEIIGQATVSVPQEDQ. Positions 16 to 34 are enriched in polar residues; that stretch reads QDVNMSSNNEGMSTSSPTG. An adenylation 1 region spans residues 351 to 747; the sequence is QEQCRLQPNT…VGRKDTQVKI (397 aa). One can recognise a Carrier 1 domain in the interval 882-958; sequence QPLSDMERLL…DLSRQSKYIE (77 aa). O-(pantetheine 4'-phosphoryl)serine is present on Ser919. A condensation region spans residues 997-1410; it reads DAYPCTPLQE…ITILTTEDLE (414 aa). Residues 1433–1827 are adenylation 2; the sequence is DKVQHRPNAP…LSFVRRKDTT (395 aa). The interval 1958–2050 is methylation (Met) domain; that stretch reads LEIGCGSGMM…KYLVKLIQDI (93 aa). Residues 2370–2448 form the Carrier 2 domain; sequence WPTTDTGKEL…RLLLDCCCDD (79 aa). The residue at position 2407 (Ser2407) is an O-(pantetheine 4'-phosphoryl)serine. A thiesterase (TE) domain region spans residues 2500 to 2817; the sequence is TVLLTGANGF…LEDMLQDLDD (318 aa).

The protein belongs to the NRP synthetase family. Pantetheine 4'-phosphate serves as cofactor.

The catalysed reaction is (S)-1-pyrroline-5-carboxylate + L-arginine + S-adenosyl-L-methionine + 2 ATP = peramine + 2 AMP + S-adenosyl-L-homocysteine + 2 diphosphate + H2O + 2 H(+). It participates in secondary metabolite biosynthesis. Functionally, nonribosomal peptide synthetase; part of the gene cluster that mediates the biosynthesis of pyrrolopyrazines, secondary metabolites showing insecticidal activity. The single multifunctional NRPS ppzA is responsible for the biosynthesis of peramine. The condensation domain of ppzA is proposed to catalyze formation of a peptide bond between 1-pyrroline-5-carboxylate and arginine. The methylation domain of ppzA would catalyze the N-methylation of the alpha-amino group of arginine. The reductase domain is proposed to be responsible for reduction of the thioester and the cyclization to form an iminium ion resulting in release from the peptide synthetase. Deprotonation of this intermediate and oxidation of the pyrroline ring would give rise to peramine. This final oxidation to give the pyrrole functionality may be spontaneous. In Epichloe species that produce only peramine, the peramine synthetase gene is not localized in a gene cluster, in contrast to Metarhizium species that contain additional pyrrolopyrazine biosynthesis genes. The 2-oxoglutarate-Fe(II) type oxidoreductase ppzC hydroxylates peramine to yield the newly identified compound 8-hydroxyperamine whereas ppzD converts L-proline into trans-4-hydroxy-L-proline, a precursor of peramine biosynthesis. The chain is Peramine synthetase ppzA from Metarhizium rileyi (strain RCEF 4871) (Nomuraea rileyi).